The primary structure comprises 354 residues: Eukaryotic translation initiation factor 3 subunit H (354 aa).

Residues 1–28 form a disordered region; it reads MATRQPYQKKFQSRDQREQTSSQQAPNS. The segment covering 19–28 has biased composition (polar residues); sequence QTSSQQAPNS. The MPN domain maps to 33–174; it reads VTVDALVVMK…LSAFRLSNKA (142 aa).

It belongs to the eIF-3 subunit H family. Component of the eukaryotic translation initiation factor 3 (eIF-3) complex.

The protein resides in the cytoplasm. Component of the eukaryotic translation initiation factor 3 (eIF-3) complex, which is involved in protein synthesis of a specialized repertoire of mRNAs and, together with other initiation factors, stimulates binding of mRNA and methionyl-tRNAi to the 40S ribosome. The eIF-3 complex specifically targets and initiates translation of a subset of mRNAs involved in cell proliferation. The protein is Eukaryotic translation initiation factor 3 subunit H of Monosiga brevicollis (Choanoflagellate).